Reading from the N-terminus, the 493-residue chain is Galactose-1-phosphate uridylyltransferase (493 aa).

The protein belongs to the galactose-1-phosphate uridylyltransferase type 2 family.

It is found in the cytoplasm. The enzyme catalyses alpha-D-galactose 1-phosphate + UDP-alpha-D-glucose = alpha-D-glucose 1-phosphate + UDP-alpha-D-galactose. It functions in the pathway carbohydrate metabolism; galactose metabolism. The protein is Galactose-1-phosphate uridylyltransferase of Lactococcus lactis subsp. cremoris (strain SK11).